A 209-amino-acid polypeptide reads, in one-letter code: Neurotrophin-4 (209 aa).

The first 21 residues, 1–21 (MLPRHSCSLLLFLFLLPSVPM), serve as a signal peptide directing secretion. A propeptide spanning residues 22–79 (EPHPPSSTLPPFLAPEWDLLSPRVALSRGAPAGPPLLFLLEAGAYGEPAGAPANRSRR) is cleaved from the precursor. Asn75 carries an N-linked (GlcNAc...) asparagine glycan. 3 disulfides stabilise this stretch: Cys96/Cys169, Cys140/Cys198, and Cys157/Cys200.

It belongs to the NGF-beta family.

Its subcellular location is the secreted. Its function is as follows. Target-derived survival factor for peripheral sensory sympathetic neurons. May promote ameloblast differentiation and subsequent reduction in proliferation of ameloblasts. The chain is Neurotrophin-4 (Ntf4) from Mus musculus (Mouse).